Here is a 261-residue protein sequence, read N- to C-terminus: Ribonuclease PH (261 aa).

Phosphate contacts are provided by residues arginine 86 and 124-126; that span reads GTR.

This sequence belongs to the RNase PH family. As to quaternary structure, homohexameric ring arranged as a trimer of dimers.

The catalysed reaction is tRNA(n+1) + phosphate = tRNA(n) + a ribonucleoside 5'-diphosphate. In terms of biological role, phosphorolytic 3'-5' exoribonuclease that plays an important role in tRNA 3'-end maturation. Removes nucleotide residues following the 3'-CCA terminus of tRNAs; can also add nucleotides to the ends of RNA molecules by using nucleoside diphosphates as substrates, but this may not be physiologically important. Probably plays a role in initiation of 16S rRNA degradation (leading to ribosome degradation) during starvation. In Persephonella marina (strain DSM 14350 / EX-H1), this protein is Ribonuclease PH.